An 86-amino-acid polypeptide reads, in one-letter code: Kappa-theraphotoxin-Cg1a 3 (86 aa).

The N-terminal stretch at 1–21 is a signal peptide; that stretch reads MKVSVLITLAVLGVMFVWASA. A propeptide spanning residues 22–50 is cleaved from the precursor; it reads AELEERGSDQRDSPAWLKSMERIFRSEER. 3 disulfide bridges follow: C52–C66, C59–C71, and C65–C78. F84 carries the phenylalanine amide modification.

This sequence belongs to the neurotoxin 10 (Hwtx-1) family. 28 (Jztx-11) subfamily. In terms of tissue distribution, expressed by the venom gland.

The protein localises to the secreted. In terms of biological role, this toxin acts as a voltage-dependent gating-modifier. It inhibits the sodium conductance (IC(50)=124 nM) and slows the fast inactivation (EC(50)=1180 nM) of Nav1.5/SCN5A. It significantly shifts the activation to more depolarized voltages and decreases the deactivation of Nav1.5 currents upon extreme depolarization, but only slightly affects voltage-dependence of steady-state inactivation. In addition, this toxin causes an approximately five-fold decrease in the rate of recovery from inactivation and an approximately 1.9-fold reduction in the closed-state inactivation rate. This toxin integrates the functions of site 3 toxins (alpha-scorpion toxins) with site 4 toxins (beta-scorpion and spider toxins) by targeting multiple sites on Nav1.5. Also shows inhibition of voltage-gated potassium channels (5 uM completely inhibits Kv2.1/KCNB1, whereas 5 uM moderately inhibits Kv4.2/KCND2 Kv4.1/KCND1 channels). This Chilobrachys guangxiensis (Chinese earth tiger tarantula) protein is Kappa-theraphotoxin-Cg1a 3.